Consider the following 399-residue polypeptide: MLPFPPGAILRDVLNVFFVALVLVRFVIDRKKTYFPLVFTIFSWSAVILWVIALTIFSPDKIQAIMGGRSYILFPAVFIALVILKVSYPQSLNIEKIVCYIIFLMFMVATISIIDVLMNGEFIKLLGYDEHYAGEQLNLINSYDGMVRATGGFSDALNFGYMLTLGVLLCMECFSQGYKRLLMLIISFVLFIAICMSLTRGAILVAALIYALYIISNRKMLFCGITLFVIIIPVLAISTNIFDNYTEILIGRFTDSSQASRGSTQGRIDMAINSLNFLSEHPSGIGLGTQGSGNMLSVKDNRLNTDNYFFWIALETGIIGLIINIIYLASQFYSSTLLNRIYGSHCSNMHYRLYFLFGSIYFISAALSSAPSSSTFSIYYWTVLALIPFLKLTNRRCTR.

The next 10 membrane-spanning stretches (helical) occupy residues 4-24, 37-57, 64-84, 97-117, 151-171, 185-205, 222-242, 309-329, 353-373, and 374-394; these read FPPG…LVLV, LVFT…LTIF, AIMG…LVIL, IVCY…IDVL, GGFS…LLCM, IISF…AILV, FCGI…TNIF, FFWI…IYLA, LYFL…APSS, and STFS…KLTN.

Its subcellular location is the cell inner membrane. It catalyses the reaction n lipid-linked O-antigen repeat units = a lipid-linked O antigen + (n-1) polyisoprenyl diphosphate.. It participates in bacterial outer membrane biogenesis; LPS O-antigen biosynthesis. Functionally, polymerase involved in the biosynthesis of the lipopolysaccharide (LPS). Catalyzes the polymerization of the O-antigen repeat units on the periplasmic face of the inner membrane, leading to the formation of the lipid-linked O-antigen molecule. The protein is O-antigen polymerase of Salmonella muenchen.